The primary structure comprises 94 residues: MLKPLENRVVLRVKEEEEKSMGGIVLTSASQEKPQTAEVIAVGEGKTTNHGTLISPLVKVGDTVIFEKFSGTTVKMDGEEFLILKDSDLLAIVE.

The protein belongs to the GroES chaperonin family. Heptamer of 7 subunits arranged in a ring. Interacts with the chaperonin GroEL.

The protein resides in the cytoplasm. Functionally, together with the chaperonin GroEL, plays an essential role in assisting protein folding. The GroEL-GroES system forms a nano-cage that allows encapsulation of the non-native substrate proteins and provides a physical environment optimized to promote and accelerate protein folding. GroES binds to the apical surface of the GroEL ring, thereby capping the opening of the GroEL channel. This Lactococcus lactis subsp. cremoris (strain SK11) protein is Co-chaperonin GroES.